The chain runs to 256 residues: tRNA (guanine-N(1)-)-methyltransferase (256 aa).

S-adenosyl-L-methionine contacts are provided by residues Gly-119 and 139–144 (IGDYVV).

This sequence belongs to the RNA methyltransferase TrmD family. In terms of assembly, homodimer.

The protein localises to the cytoplasm. The enzyme catalyses guanosine(37) in tRNA + S-adenosyl-L-methionine = N(1)-methylguanosine(37) in tRNA + S-adenosyl-L-homocysteine + H(+). Specifically methylates guanosine-37 in various tRNAs. This chain is tRNA (guanine-N(1)-)-methyltransferase, found in Nitrosospira multiformis (strain ATCC 25196 / NCIMB 11849 / C 71).